The primary structure comprises 485 residues: Glycogen synthase (485 aa).

Lysine 20 is an ADP-alpha-D-glucose binding site.

The protein belongs to the glycosyltransferase 1 family. Bacterial/plant glycogen synthase subfamily.

The catalysed reaction is [(1-&gt;4)-alpha-D-glucosyl](n) + ADP-alpha-D-glucose = [(1-&gt;4)-alpha-D-glucosyl](n+1) + ADP + H(+). It functions in the pathway glycan biosynthesis; glycogen biosynthesis. Synthesizes alpha-1,4-glucan chains using ADP-glucose. The chain is Glycogen synthase from Vibrio vulnificus (strain CMCP6).